The chain runs to 125 residues: Fluoride-specific ion channel FluC (125 aa).

Transmembrane regions (helical) follow at residues 4-24 (WLFVAAGGAIGACLRFGISEL), 35-55 (YGTLVVNVVGSFIMGIAFALI), 69-89 (LMVGILGALTTFSSFALDTVV), and 103-123 (MGLNLSLCLAMVLLGMQLVAS). Gly75 and Thr78 together coordinate Na(+).

Belongs to the fluoride channel Fluc/FEX (TC 1.A.43) family.

The protein localises to the cell inner membrane. It catalyses the reaction fluoride(in) = fluoride(out). Na(+) is not transported, but it plays an essential structural role and its presence is essential for fluoride channel function. Its function is as follows. Fluoride-specific ion channel. Important for reducing fluoride concentration in the cell, thus reducing its toxicity. The sequence is that of Fluoride-specific ion channel FluC from Aeromonas salmonicida (strain A449).